Consider the following 268-residue polypeptide: Tryptophan synthase alpha chain (268 aa).

Residues Glu49 and Asp60 each act as proton acceptor in the active site.

It belongs to the TrpA family. As to quaternary structure, tetramer of two alpha and two beta chains.

The catalysed reaction is (1S,2R)-1-C-(indol-3-yl)glycerol 3-phosphate + L-serine = D-glyceraldehyde 3-phosphate + L-tryptophan + H2O. Its pathway is amino-acid biosynthesis; L-tryptophan biosynthesis; L-tryptophan from chorismate: step 5/5. Its function is as follows. The alpha subunit is responsible for the aldol cleavage of indoleglycerol phosphate to indole and glyceraldehyde 3-phosphate. The protein is Tryptophan synthase alpha chain of Shigella boydii serotype 18 (strain CDC 3083-94 / BS512).